A 193-amino-acid polypeptide reads, in one-letter code: Guanylate kinase (193 aa).

Residues 8–188 form the Guanylate kinase-like domain; the sequence is GRLVVLVGPS…ACEQLVSLFV (181 aa). 15–22 is an ATP binding site; sequence GPSAVGKS.

The protein belongs to the guanylate kinase family.

It is found in the cytoplasm. It carries out the reaction GMP + ATP = GDP + ADP. Functionally, essential for recycling GMP and indirectly, cGMP. The polypeptide is Guanylate kinase (Nocardia farcinica (strain IFM 10152)).